The chain runs to 427 residues: Enolase (427 aa).

A (2R)-2-phosphoglycerate-binding site is contributed by Gln-162. Glu-204 acts as the Proton donor in catalysis. Mg(2+) contacts are provided by Asp-241, Glu-282, and Asp-309. The (2R)-2-phosphoglycerate site is built by Lys-334, Arg-363, Ser-364, and Lys-385. The Proton acceptor role is filled by Lys-334.

It belongs to the enolase family. Mg(2+) serves as cofactor.

The protein resides in the cytoplasm. It is found in the secreted. It localises to the cell surface. The catalysed reaction is (2R)-2-phosphoglycerate = phosphoenolpyruvate + H2O. Its pathway is carbohydrate degradation; glycolysis; pyruvate from D-glyceraldehyde 3-phosphate: step 4/5. Functionally, catalyzes the reversible conversion of 2-phosphoglycerate (2-PG) into phosphoenolpyruvate (PEP). It is essential for the degradation of carbohydrates via glycolysis. The sequence is that of Enolase from Frankia alni (strain DSM 45986 / CECT 9034 / ACN14a).